The primary structure comprises 136 residues: Flagellar assembly factor FliW 2 (136 aa).

This sequence belongs to the FliW family. Interacts with translational regulator CsrA and flagellin(s).

It is found in the cytoplasm. In terms of biological role, acts as an anti-CsrA protein, binds CsrA and prevents it from repressing translation of its target genes, one of which is flagellin. Binds to flagellin and participates in the assembly of the flagellum. The polypeptide is Flagellar assembly factor FliW 2 (Wolinella succinogenes (strain ATCC 29543 / DSM 1740 / CCUG 13145 / JCM 31913 / LMG 7466 / NCTC 11488 / FDC 602W) (Vibrio succinogenes)).